Here is a 302-residue protein sequence, read N- to C-terminus: MRHLISMRDIGREEILNILDESERMEAILNEKGHCDFLNGRILATLFYEPSTRTRLSFETAMKRLGGNVIGFTDISNTSVTKGESLADTIKVISGYSDLIAIRHPSEGAARLSSENSKVPVINAGDGSNQHPTQTLLDLYTIKREVGHIENLKIAFIGDLKYGRTVHSLCQALSLFKGVEIKLISPDELKMPREVIEDISGKIKLSEMTDVEIDDVDVVYMTRIQKERFVDVNEYYKVKGIYRLSKEHIGDKNVVIMHPLPRVDEIDSEVDTLPQARYFKQSFYGVPVRMAILKLLFEDSVK.

Carbamoyl phosphate-binding residues include Arg-53 and Thr-54. Position 82 (Lys-82) interacts with L-aspartate. Carbamoyl phosphate-binding residues include Arg-103, His-131, and Gln-134. Residues Arg-164 and Arg-223 each contribute to the L-aspartate site. 2 residues coordinate carbamoyl phosphate: Leu-260 and Pro-261.

The protein belongs to the aspartate/ornithine carbamoyltransferase superfamily. ATCase family. In terms of assembly, heterooligomer of catalytic and regulatory chains.

It carries out the reaction carbamoyl phosphate + L-aspartate = N-carbamoyl-L-aspartate + phosphate + H(+). It functions in the pathway pyrimidine metabolism; UMP biosynthesis via de novo pathway; (S)-dihydroorotate from bicarbonate: step 2/3. Its function is as follows. Catalyzes the condensation of carbamoyl phosphate and aspartate to form carbamoyl aspartate and inorganic phosphate, the committed step in the de novo pyrimidine nucleotide biosynthesis pathway. The sequence is that of Aspartate carbamoyltransferase catalytic subunit from Methanococcus maripaludis (strain C6 / ATCC BAA-1332).